The chain runs to 278 residues: Protein mtd-1 (278 aa).

The N-terminal stretch at 1–17 (MRSSLLLLVFFLSIGWA) is a signal peptide. The Extracellular portion of the chain corresponds to 18–254 (RYCVHNEKSW…EMLEEIEARK (237 aa)). Asn-40, Asn-73, Asn-163, and Asn-190 each carry an N-linked (GlcNAc...) asparagine glycan. A helical transmembrane segment spans residues 255–271 (VPVDSSAPVNIILSIAF). At 272 to 278 (SIFLIHF) the chain is on the cytoplasmic side.

It is found in the cell membrane. Its function is as follows. Plays a role in mechanosensory transduction (touch sensitivity). The sequence is that of Protein mtd-1 from Caenorhabditis elegans.